The following is a 704-amino-acid chain: Elongation factor G (704 aa).

The tr-type G domain maps to 10-290 (NKVRNIGIMA…AVIDYLPSPL (281 aa)). Residues 19–26 (AHIDAGKT), 83–87 (DTPGH), and 137–140 (NKMD) contribute to the GTP site.

The protein belongs to the TRAFAC class translation factor GTPase superfamily. Classic translation factor GTPase family. EF-G/EF-2 subfamily.

The protein resides in the cytoplasm. Functionally, catalyzes the GTP-dependent ribosomal translocation step during translation elongation. During this step, the ribosome changes from the pre-translocational (PRE) to the post-translocational (POST) state as the newly formed A-site-bound peptidyl-tRNA and P-site-bound deacylated tRNA move to the P and E sites, respectively. Catalyzes the coordinated movement of the two tRNA molecules, the mRNA and conformational changes in the ribosome. The polypeptide is Elongation factor G (Clavibacter sepedonicus (Clavibacter michiganensis subsp. sepedonicus)).